A 417-amino-acid polypeptide reads, in one-letter code: Multifunctional CCA protein (417 aa).

ATP is bound by residues Gly8 and Arg11. CTP-binding residues include Gly8 and Arg11. Asp21 and Asp23 together coordinate Mg(2+). Residues Arg91, Arg137, and Arg140 each contribute to the ATP site. The CTP site is built by Arg91, Arg137, and Arg140. Positions 225–326 constitute an HD domain; that stretch reads SGIHTLMTLQ…LNVLKKTDAF (102 aa).

Belongs to the tRNA nucleotidyltransferase/poly(A) polymerase family. Bacterial CCA-adding enzyme type 1 subfamily. Monomer. Can also form homodimers and oligomers. The cofactor is Mg(2+). Ni(2+) is required as a cofactor.

It carries out the reaction a tRNA precursor + 2 CTP + ATP = a tRNA with a 3' CCA end + 3 diphosphate. It catalyses the reaction a tRNA with a 3' CCA end + 2 CTP + ATP = a tRNA with a 3' CCACCA end + 3 diphosphate. Catalyzes the addition and repair of the essential 3'-terminal CCA sequence in tRNAs without using a nucleic acid template. Adds these three nucleotides in the order of C, C, and A to the tRNA nucleotide-73, using CTP and ATP as substrates and producing inorganic pyrophosphate. tRNA 3'-terminal CCA addition is required both for tRNA processing and repair. Also involved in tRNA surveillance by mediating tandem CCA addition to generate a CCACCA at the 3' terminus of unstable tRNAs. While stable tRNAs receive only 3'-terminal CCA, unstable tRNAs are marked with CCACCA and rapidly degraded. The sequence is that of Multifunctional CCA protein from Neisseria meningitidis serogroup A / serotype 4A (strain DSM 15465 / Z2491).